The sequence spans 377 residues: MKILVDENMPYAEALFGRLGDVQTVAGRAIPAPALALADALMVRSVTRVDGALLDGSRVKFVGTATAGTDHVDEDWLAQAGIGFSVAPGCNAIAVVEYVFSALLWLAQRDGFALRDKTVGIVGVGNVGGRLQRRLNAFGVRTLLCDPPLAEAGAPGDWQPLETLVAEADVLTFHTPLTLAGRHATWHQVDEALLAALPAGRIIINACRGAVVDNAALLQALEGGKPLSVVLDVWEPEPALSLPLLARVDIGTAHIAGYTLEGKARGTTQVFDAYSAYVGSDERASLAALLPPPAVERIRLRGAIDEEALRLLSHLVYDVRRDDMQLRRVAGLPGEFDRLRKNYYQRREWSSLCVETDNSIGADALRQLGFQARPFAG.

Residues Ser-45 and Thr-66 each coordinate substrate. Positions 146 and 175 each coordinate NAD(+). Residue Arg-208 is part of the active site. Asp-232 provides a ligand contact to NAD(+). Glu-237 is an active-site residue. His-254 acts as the Proton donor in catalysis. NAD(+) is bound at residue Gly-257. Residue Tyr-258 coordinates substrate.

Belongs to the D-isomer specific 2-hydroxyacid dehydrogenase family. PdxB subfamily. Homodimer.

It is found in the cytoplasm. It carries out the reaction 4-phospho-D-erythronate + NAD(+) = (R)-3-hydroxy-2-oxo-4-phosphooxybutanoate + NADH + H(+). It functions in the pathway cofactor biosynthesis; pyridoxine 5'-phosphate biosynthesis; pyridoxine 5'-phosphate from D-erythrose 4-phosphate: step 2/5. Its function is as follows. Catalyzes the oxidation of erythronate-4-phosphate to 3-hydroxy-2-oxo-4-phosphonooxybutanoate. The protein is Erythronate-4-phosphate dehydrogenase of Sodalis glossinidius (strain morsitans).